A 349-amino-acid polypeptide reads, in one-letter code: Delta(7)-sterol 5(6)-desaturase ERG3A (349 aa).

Transmembrane regions (helical) follow at residues 84 to 104, 124 to 144, and 162 to 182; these read ITWI…YIFI, IIAA…FFLL, and LWYD…CIYW. Residues 170–296 enclose the Fatty acid hydroxylase domain; that stretch reads PLFLLFTDFC…FTAFDRMGGT (127 aa). Residues 184-188 carry the Histidine box-1 motif; sequence HRWLH. The Histidine box-2 signature appears at 197-201; the sequence is HKLHH. A helical transmembrane segment spans residues 227–247; it reads HIFPFIFPLQKMAYVALFVFV. The short motif at 272–276 is the Histidine box-3 element; the sequence is HSLHH.

The protein belongs to the sterol desaturase family.

It is found in the endoplasmic reticulum membrane. It carries out the reaction episterol + 2 Fe(II)-[cytochrome b5] + O2 + 2 H(+) = 5-dehydroepisterol + 2 Fe(III)-[cytochrome b5] + 2 H2O. It functions in the pathway steroid metabolism; ergosterol biosynthesis. Functionally, C-5 sterol desaturase; part of the third module of ergosterol biosynthesis pathway that includes the late steps of the pathway. ERG3A and ERG3BB catalyze the introduction of a C-5 double bond in the B ring to produce 5-dehydroepisterol. The third module or late pathway involves the ergosterol synthesis itself through consecutive reactions that mainly occur in the endoplasmic reticulum (ER) membrane. Firstly, the squalene synthase ERG9 catalyzes the condensation of 2 farnesyl pyrophosphate moieties to form squalene, which is the precursor of all steroids. Squalene synthase is crucial for balancing the incorporation of farnesyl diphosphate (FPP) into sterol and nonsterol isoprene synthesis. Secondly, squalene is converted into lanosterol by the consecutive action of the squalene epoxidase ERG1 and the lanosterol synthase ERG7. Then, the delta(24)-sterol C-methyltransferase ERG6 methylates lanosterol at C-24 to produce eburicol. Eburicol is the substrate of the sterol 14-alpha demethylase encoded by CYP51A, CYP51B and CYP51C, to yield 4,4,24-trimethyl ergosta-8,14,24(28)-trienol. CYP51B encodes the enzyme primarily responsible for sterol 14-alpha-demethylation, and plays an essential role in ascospore formation. CYP51A encodes an additional sterol 14-alpha-demethylase, induced on ergosterol depletion and responsible for the intrinsic variation in azole sensitivity. The third CYP51 isoform, CYP51C, does not encode a sterol 14-alpha-demethylase, but is required for full virulence on host wheat ears. The C-14 reductase ERG24 then reduces the C14=C15 double bond which leads to 4,4-dimethylfecosterol. A sequence of further demethylations at C-4, involving the C-4 demethylation complex containing the C-4 methylsterol oxidases ERG25, the sterol-4-alpha-carboxylate 3-dehydrogenase ERG26 and the 3-keto-steroid reductase ERG27, leads to the production of fecosterol via 4-methylfecosterol. ERG28 has a role as a scaffold to help anchor ERG25, ERG26 and ERG27 to the endoplasmic reticulum. The C-8 sterol isomerase ERG2 then catalyzes the reaction which results in unsaturation at C-7 in the B ring of sterols and thus converts fecosterol to episterol. The sterol-C5-desaturases ERG3A and ERG3BB then catalyze the introduction of a C-5 double bond in the B ring to produce 5-dehydroepisterol. The C-22 sterol desaturases ERG5A and ERG5B further convert 5-dehydroepisterol into ergosta-5,7,22,24(28)-tetraen-3beta-ol by forming the C-22(23) double bond in the sterol side chain. Finally, ergosta-5,7,22,24(28)-tetraen-3beta-ol is substrate of the C-24(28) sterol reductase ERG4 to produce ergosterol. The protein is Delta(7)-sterol 5(6)-desaturase ERG3A of Gibberella zeae (strain ATCC MYA-4620 / CBS 123657 / FGSC 9075 / NRRL 31084 / PH-1) (Wheat head blight fungus).